The chain runs to 400 residues: Leucine-rich repeat flightless-interacting protein 2 (400 aa).

Disordered regions lie at residues 1 to 28 (MGTP…SNID) and 53 to 119 (LERQ…LSEV). A Phosphoserine modification is found at serine 18. Positions 29 to 71 (REAEARLAAKRAARAEARDIRMRELERQQKELDEKSDKQYAEN) form a coiled coil. Residues 53-68 (LERQQKELDEKSDKQY) are compositionally biased toward basic and acidic residues. The segment covering 73 to 102 (TRPSSRNSASATTPLSGNSSRRVSGDTSSL) has biased composition (polar residues). Serine 77, serine 80, serine 88, serine 92, and serine 96 each carry phosphoserine. The residue at position 99 (threonine 99) is a Phosphothreonine. Phosphoserine occurs at positions 100 and 101. Coiled-coil stretches lie at residues 106 to 202 (DTSL…LIEK) and 245 to 393 (LDVR…KANR).

The protein belongs to the LRRFIP family. In terms of assembly, interacts with DVL3 and FLII. Weakly interacts with MYD88 in resting cells. Following LPS-stimulation, the interaction with MYD88 is rapidly enhanced; the complex gradually dissociates to basal levels after 6 hours of stimulation. Interaction with MYD88 is regulated by LPS-induced phosphorylation. In the presence of LPS, competes with FLII for MYD88-binding.

Functionally, may function as activator of the canonical Wnt signaling pathway, in association with DVL3, upstream of CTNNB1/beta-catenin. Positively regulates Toll-like receptor (TLR) signaling in response to agonist probably by competing with the negative FLII regulator for MYD88-binding. The protein is Leucine-rich repeat flightless-interacting protein 2 (LRRFIP2) of Bos taurus (Bovine).